Here is a 492-residue protein sequence, read N- to C-terminus: Glutamyl-tRNA(Gln) amidotransferase subunit A (492 aa).

Residues Lys-78 and Ser-158 each act as charge relay system in the active site. Ser-182 functions as the Acyl-ester intermediate in the catalytic mechanism.

Belongs to the amidase family. GatA subfamily. As to quaternary structure, heterotrimer of A, B and C subunits.

It catalyses the reaction L-glutamyl-tRNA(Gln) + L-glutamine + ATP + H2O = L-glutaminyl-tRNA(Gln) + L-glutamate + ADP + phosphate + H(+). Functionally, allows the formation of correctly charged Gln-tRNA(Gln) through the transamidation of misacylated Glu-tRNA(Gln) in organisms which lack glutaminyl-tRNA synthetase. The reaction takes place in the presence of glutamine and ATP through an activated gamma-phospho-Glu-tRNA(Gln). The protein is Glutamyl-tRNA(Gln) amidotransferase subunit A of Rhodopseudomonas palustris (strain ATCC BAA-98 / CGA009).